The following is a 1079-amino-acid chain: Tudor domain-containing protein 7A (1079 aa).

Residues 3 to 76 (DVELVKKMLR…TGEVMCFAGV (74 aa)) enclose the HTH OST-type 1 domain. Residues 153–175 (LPSSRAPAWQMNRKSPVPEKTSV) form a disordered region. HTH OST-type domains lie at 205–270 (DVEL…RLVY) and 366–434 (LTTE…ILYT). Tudor domains follow at residues 519–576 (SPKI…FMTL) and 708–765 (RPFC…FLKE).

Belongs to the TDRD7 family.

The protein resides in the cytoplasm. In terms of biological role, component of specific cytoplasmic RNA granules involved in post-transcriptional regulation of specific genes: probably acts by binding to specific mRNAs and regulating their translation. Probably required during spermatogenesis. Required for structural integrity of granules in primordial germ cells (PGCs). The protein is Tudor domain-containing protein 7A (tdrd7a) of Danio rerio (Zebrafish).